A 383-amino-acid polypeptide reads, in one-letter code: Lipid-A-disaccharide synthase (383 aa).

This sequence belongs to the LpxB family.

It carries out the reaction a lipid X + a UDP-2-N,3-O-bis[(3R)-3-hydroxyacyl]-alpha-D-glucosamine = a lipid A disaccharide + UDP + H(+). Its pathway is bacterial outer membrane biogenesis; LPS lipid A biosynthesis. Functionally, condensation of UDP-2,3-diacylglucosamine and 2,3-diacylglucosamine-1-phosphate to form lipid A disaccharide, a precursor of lipid A, a phosphorylated glycolipid that anchors the lipopolysaccharide to the outer membrane of the cell. This chain is Lipid-A-disaccharide synthase, found in Trichlorobacter lovleyi (strain ATCC BAA-1151 / DSM 17278 / SZ) (Geobacter lovleyi).